Consider the following 596-residue polypeptide: DNA primase (596 aa).

The CHC2-type zinc-finger motif lies at 41–65 (CPFHHEKTPSFSVSQDKQIYKCFGC). The 82-residue stretch at 255–336 (DTIIIVEGYM…DIKIIKIPDG (82 aa)) folds into the Toprim domain. Residues Glu-261, Asp-305, and Asp-307 each coordinate Mg(2+).

It belongs to the DnaG primase family. In terms of assembly, monomer. Interacts with DnaB. Zn(2+) serves as cofactor. Mg(2+) is required as a cofactor.

It catalyses the reaction ssDNA + n NTP = ssDNA/pppN(pN)n-1 hybrid + (n-1) diphosphate.. Its function is as follows. RNA polymerase that catalyzes the synthesis of short RNA molecules used as primers for DNA polymerase during DNA replication. This Clostridium acetobutylicum (strain ATCC 824 / DSM 792 / JCM 1419 / IAM 19013 / LMG 5710 / NBRC 13948 / NRRL B-527 / VKM B-1787 / 2291 / W) protein is DNA primase.